Consider the following 288-residue polypeptide: Sulfhydrogenase 2 subunit gamma (288 aa).

Positions 4 to 103 (YRSYDARIIE…RGPYGNGFPM (100 aa)) constitute an FAD-binding FR-type domain. Residues Cys250, Cys255, Cys258, and Cys270 each coordinate [2Fe-2S] cluster.

As to quaternary structure, dimer of heterotetramer of alpha, beta, gamma and delta subunits. The nickel-containing alpha and delta subunits constitute the hydrogenase activity. The beta and gamma subunits (flavin-containing dimer) constitute the sulfur reductase activity. FAD serves as cofactor. [2Fe-2S] cluster is required as a cofactor.

The protein resides in the cytoplasm. It carries out the reaction n sulfur + H2 = (n-1) sulfur + hydrogen sulfide + H(+). In terms of biological role, part of a bifunctional enzyme complex that functions as a hydrogen-evolving hydrogenase with sulfur-reducing activity. May play a role in hydrogen cycling during fermentative growth. Activity exhibited with NAD in addition to NADPH. The beta and gamma subunits form the sulfur-reducing component that catalyzes the cytoplasmic production of hydrogen sulfide in the presence of elemental sulfur. This Pyrococcus furiosus (strain ATCC 43587 / DSM 3638 / JCM 8422 / Vc1) protein is Sulfhydrogenase 2 subunit gamma.